The chain runs to 223 residues: Thiamine-phosphate synthase (223 aa).

Residues 47–51 and N84 each bind 4-amino-2-methyl-5-(diphosphooxymethyl)pyrimidine; that span reads QLRDK. 2 residues coordinate Mg(2+): D85 and D104. S123 is a binding site for 4-amino-2-methyl-5-(diphosphooxymethyl)pyrimidine. Residue 150 to 152 coordinates 2-[(2R,5Z)-2-carboxy-4-methylthiazol-5(2H)-ylidene]ethyl phosphate; sequence TPT. A 4-amino-2-methyl-5-(diphosphooxymethyl)pyrimidine-binding site is contributed by K153. G182 is a 2-[(2R,5Z)-2-carboxy-4-methylthiazol-5(2H)-ylidene]ethyl phosphate binding site.

The protein belongs to the thiamine-phosphate synthase family. Mg(2+) serves as cofactor.

It catalyses the reaction 2-[(2R,5Z)-2-carboxy-4-methylthiazol-5(2H)-ylidene]ethyl phosphate + 4-amino-2-methyl-5-(diphosphooxymethyl)pyrimidine + 2 H(+) = thiamine phosphate + CO2 + diphosphate. The catalysed reaction is 2-(2-carboxy-4-methylthiazol-5-yl)ethyl phosphate + 4-amino-2-methyl-5-(diphosphooxymethyl)pyrimidine + 2 H(+) = thiamine phosphate + CO2 + diphosphate. It carries out the reaction 4-methyl-5-(2-phosphooxyethyl)-thiazole + 4-amino-2-methyl-5-(diphosphooxymethyl)pyrimidine + H(+) = thiamine phosphate + diphosphate. It functions in the pathway cofactor biosynthesis; thiamine diphosphate biosynthesis; thiamine phosphate from 4-amino-2-methyl-5-diphosphomethylpyrimidine and 4-methyl-5-(2-phosphoethyl)-thiazole: step 1/1. In terms of biological role, condenses 4-methyl-5-(beta-hydroxyethyl)thiazole monophosphate (THZ-P) and 2-methyl-4-amino-5-hydroxymethyl pyrimidine pyrophosphate (HMP-PP) to form thiamine monophosphate (TMP). This Saccharopolyspora erythraea (strain ATCC 11635 / DSM 40517 / JCM 4748 / NBRC 13426 / NCIMB 8594 / NRRL 2338) protein is Thiamine-phosphate synthase.